A 168-amino-acid chain; its full sequence is Cofilin-1-A (168 aa).

A2 is modified (N-acetylalanine). Positions 4–153 constitute an ADF-H domain; it reads GVMVSDDVIK…NDPCNLADKL (150 aa). Residues 30 to 34 carry the Nuclear localization signal motif; the sequence is KKRKK.

Belongs to the actin-binding proteins ADF family. Inactive when phosphorylated. Phosphorylation levels vary during development. Oocytes contain only the phosphorylated form, and 80-95% of cfl1 protein is phosphorylated in unfertilized eggs. Rapid dephosphorylation occurs within 30 minutes after fertilization. Phosphorylation levels increase again between the morula and blastula stages (5-8 hpf) and then decrease again as gastrulation approaches. Dephosphorylated by pdxp. As to expression, expressed diffusely in both animal and vegetal hemispheres of the oocyte. During cleavage, expression accumulates around the cleavage furrow, along the vegetal membrane, and later in the midbody. Strongly expressed in the animal hemisphere during blastula stages, with most cells showing expression by gastrulation. By stage 17, expression is highest in cells of the developing neuroectoderm, and at stage 24 the notochord, neural tube, neural crest, somites and some cells of the archenteron show high expression. By stage 35, expression has declined in the notochord, but remains in the neural tube, epidermis and a layer of cells in the archenteron. Also highly expressed in the retina and neuronal cell bodies at the base of the cement gland but not the cement gland itself. At stage 38, expression is widespread, being highest in the nervous system and retina. In the adult, expression is high in the brain, heart, oocyte, stomach, and low in skeletal muscle.

The protein resides in the nucleus matrix. Its subcellular location is the cytoplasm. It is found in the cytoskeleton. The protein localises to the cell cortex. It localises to the membrane. May play a role in the regulation of cell morphology and cytoskeletal organization. Binds to F-actin and exhibits pH-sensitive F-actin depolymerizing activity. Required for formation of the cleavage furrow during cytokinesis. The protein is Cofilin-1-A (cfl1-a) of Xenopus laevis (African clawed frog).